The primary structure comprises 225 residues: MTEETPGFEEKPDVPSGATPDDAEPQAASEEGAAPAGDASENAGLVAQLDQVRTALNERTADLQRLQAEYQNYRRRVERDRVAVKEVAVANLLSELLPVLDDVGRAREHGELVGGFKSVAESLETTVAKLGLQQFGKEGEPFDPTIHEALMHSYAPDVTETTCVAILQPGYRIGERTIRPARVAVAEPQPGAQTVKPAEDAAEAQDSSGAEDDAGTKESGGPDEG.

Disordered stretches follow at residues 1–44 and 183–225; these read MTEE…ENAG and VAVA…PDEG.

The protein belongs to the GrpE family. As to quaternary structure, homodimer.

It is found in the cytoplasm. Participates actively in the response to hyperosmotic and heat shock by preventing the aggregation of stress-denatured proteins, in association with DnaK and GrpE. It is the nucleotide exchange factor for DnaK and may function as a thermosensor. Unfolded proteins bind initially to DnaJ; upon interaction with the DnaJ-bound protein, DnaK hydrolyzes its bound ATP, resulting in the formation of a stable complex. GrpE releases ADP from DnaK; ATP binding to DnaK triggers the release of the substrate protein, thus completing the reaction cycle. Several rounds of ATP-dependent interactions between DnaJ, DnaK and GrpE are required for fully efficient folding. The sequence is that of Protein GrpE from Streptomyces coelicolor (strain ATCC BAA-471 / A3(2) / M145).